Here is a 361-residue protein sequence, read N- to C-terminus: Phospho-N-acetylmuramoyl-pentapeptide-transferase (361 aa).

The next 10 membrane-spanning stretches (helical) occupy residues 28–48 (LAII…IKFL), 74–94 (TMGG…LADL), 99–119 (IWIT…DDYA), 133–153 (SKFL…EYLD), 168–188 (LSLD…VGSS), 203–223 (VPIA…GNLI), 236–256 (TGEL…FLWF), 263–283 (VFMG…ISVI), 288–308 (IVLA…ILQV), and 338–358 (KVVI…LSSL).

Belongs to the glycosyltransferase 4 family. MraY subfamily. Requires Mg(2+) as cofactor.

It is found in the cell inner membrane. It carries out the reaction UDP-N-acetyl-alpha-D-muramoyl-L-alanyl-gamma-D-glutamyl-meso-2,6-diaminopimeloyl-D-alanyl-D-alanine + di-trans,octa-cis-undecaprenyl phosphate = di-trans,octa-cis-undecaprenyl diphospho-N-acetyl-alpha-D-muramoyl-L-alanyl-D-glutamyl-meso-2,6-diaminopimeloyl-D-alanyl-D-alanine + UMP. Its pathway is cell wall biogenesis; peptidoglycan biosynthesis. In terms of biological role, catalyzes the initial step of the lipid cycle reactions in the biosynthesis of the cell wall peptidoglycan: transfers peptidoglycan precursor phospho-MurNAc-pentapeptide from UDP-MurNAc-pentapeptide onto the lipid carrier undecaprenyl phosphate, yielding undecaprenyl-pyrophosphoryl-MurNAc-pentapeptide, known as lipid I. The polypeptide is Phospho-N-acetylmuramoyl-pentapeptide-transferase (Rickettsia prowazekii (strain Madrid E)).